A 148-amino-acid chain; its full sequence is uncharacterized protein (148 aa).

An N-acetyltransferase domain is found at 8 to 148; the sequence is QVMQEPELKI…DGFLTLILRN (141 aa).

The protein belongs to the acetyltransferase family.

This is an uncharacterized protein from Bacillus subtilis (strain 168).